Consider the following 366-residue polypeptide: Prostaglandin F2-alpha receptor (366 aa).

The Extracellular portion of the chain corresponds to 1-31 (MSINSSKQPASSAAGLIANTTCQTENRLSVF). N-linked (GlcNAc...) asparagine glycosylation is found at Asn4 and Asn19. The helical transmembrane segment at 32–55 (FSIIFMTVGIVSNSLAIAILMKAY) threads the bilayer. The Cytoplasmic portion of the chain corresponds to 56–69 (QRFRRKSKASFLLL). Residues 70–90 (ASGLVITDFFGHLINGGIAVF) form a helical membrane-spanning segment. At 91–109 (VYASDKDWIRFDQSNILCS) the chain is on the extracellular side. Cys108 and Cys186 are oxidised to a cystine. A helical membrane pass occupies residues 110-131 (VFGISMVFSGLCPLFLGSTMAI). Residues 132-152 (ERCIGVTNPLFHSTKITSKHV) lie on the Cytoplasmic side of the membrane. Residues 153-175 (KMILSGVCMFAVFVALLPILGHR) traverse the membrane as a helical segment. The Extracellular segment spans residues 176–198 (DYQIQASRTWCFYNTEHIEDWED). The chain crosses the membrane as a helical span at residues 199–224 (RFYLLFFSSLGLLALGISFSCNAVTG). Residues 225–250 (VTLLRVKFRSQQHRQGRSHHLEMVIQ) are Cytoplasmic-facing. Residues 251–267 (LLAIMCVSCVCWSPFLV) traverse the membrane as a helical segment. Over 268–285 (TMANIAINGNNSPVTCET) the chain is Extracellular. Residues 286–307 (TLFALRMATWNQILDPWVYILL) traverse the membrane as a helical segment. Over 308 to 366 (RKAVLRNLYKLASRCCGVNIISLHIWELSSIKNSLKVAAISESPAAEKENQQASSEAGL) the chain is Cytoplasmic.

This sequence belongs to the G-protein coupled receptor 1 family. In terms of tissue distribution, highest expression in pregnant ovary. Also found in a low extent in the kidney. In the brain, expressed in astrocytes and oligodendrocytes, and meningeal fibroblasts, but not in migroglia cells.

The protein resides in the cell membrane. Receptor for prostaglandin F2-alpha (PGF2-alpha). The activity of this receptor is mediated by G proteins which activate a phosphatidylinositol-calcium second messenger system. Initiates luteolysis in the corpus luteum. The sequence is that of Prostaglandin F2-alpha receptor (Ptgfr) from Rattus norvegicus (Rat).